We begin with the raw amino-acid sequence, 262 residues long: Tryptophan synthase alpha chain (262 aa).

Residues glutamate 48 and aspartate 59 each act as proton acceptor in the active site.

It belongs to the TrpA family. In terms of assembly, tetramer of two alpha and two beta chains.

It catalyses the reaction (1S,2R)-1-C-(indol-3-yl)glycerol 3-phosphate + L-serine = D-glyceraldehyde 3-phosphate + L-tryptophan + H2O. It functions in the pathway amino-acid biosynthesis; L-tryptophan biosynthesis; L-tryptophan from chorismate: step 5/5. The alpha subunit is responsible for the aldol cleavage of indoleglycerol phosphate to indole and glyceraldehyde 3-phosphate. This is Tryptophan synthase alpha chain from Helicobacter pylori (strain Shi470).